The primary structure comprises 296 residues: MTEAMLTTDFPQLNLVHSGKVRDMYAIPGHDDKLLMVATDRISAYDVILSAIPGKGAILTQLSLFWFDLLADIVDNHMITADVTEYPEACAPYAEQLRGRSILVKRTKPLPIECIVRGYISGSFWKAYQQDTNVCGFQLPEGMQESDKFPEPIFTPSTKAELGDHDENISFERMQEIVGVEKAEQIARISKALYTRAADYARTKGVIIADTKFELGEVDGKIILIDEVLTPDSSRFWAADKYEPGKSQESFDKQYLRDYLSSLDWDKNPPAPPLPEEIIVKTKARYDEAVERITGK.

This sequence belongs to the SAICAR synthetase family.

It carries out the reaction 5-amino-1-(5-phospho-D-ribosyl)imidazole-4-carboxylate + L-aspartate + ATP = (2S)-2-[5-amino-1-(5-phospho-beta-D-ribosyl)imidazole-4-carboxamido]succinate + ADP + phosphate + 2 H(+). It participates in purine metabolism; IMP biosynthesis via de novo pathway; 5-amino-1-(5-phospho-D-ribosyl)imidazole-4-carboxamide from 5-amino-1-(5-phospho-D-ribosyl)imidazole-4-carboxylate: step 1/2. In Desulfotalea psychrophila (strain LSv54 / DSM 12343), this protein is Phosphoribosylaminoimidazole-succinocarboxamide synthase.